The following is a 63-amino-acid chain: ATP synthase F(0) complex subunit 8 (63 aa).

The helical transmembrane segment at 8–24 threads the bilayer; sequence TWFLTILSVMLTLFTLL. Position 57 is an N6-acetyllysine (K57).

The protein belongs to the ATPase protein 8 family. In terms of assembly, component of the ATP synthase complex composed at least of ATP5F1A/subunit alpha, ATP5F1B/subunit beta, ATP5MC1/subunit c (homooctomer), MT-ATP6/subunit a, MT-ATP8/subunit 8, ATP5ME/subunit e, ATP5MF/subunit f, ATP5MG/subunit g, ATP5MK/subunit k, ATP5MJ/subunit j, ATP5F1C/subunit gamma, ATP5F1D/subunit delta, ATP5F1E/subunit epsilon, ATP5PF/subunit F6, ATP5PB/subunit b, ATP5PD/subunit d, ATP5PO/subunit OSCP. ATP synthase complex consists of a soluble F(1) head domain (subunits alpha(3) and beta(3)) - the catalytic core - and a membrane F(0) domain - the membrane proton channel (subunits c, a, 8, e, f, g, k and j). These two domains are linked by a central stalk (subunits gamma, delta, and epsilon) rotating inside the F1 region and a stationary peripheral stalk (subunits F6, b, d, and OSCP). Interacts with PRICKLE3.

It localises to the mitochondrion membrane. Its function is as follows. Subunit 8, of the mitochondrial membrane ATP synthase complex (F(1)F(0) ATP synthase or Complex V) that produces ATP from ADP in the presence of a proton gradient across the membrane which is generated by electron transport complexes of the respiratory chain. ATP synthase complex consist of a soluble F(1) head domain - the catalytic core - and a membrane F(1) domain - the membrane proton channel. These two domains are linked by a central stalk rotating inside the F(1) region and a stationary peripheral stalk. During catalysis, ATP synthesis in the catalytic domain of F(1) is coupled via a rotary mechanism of the central stalk subunits to proton translocation. In vivo, can only synthesize ATP although its ATP hydrolase activity can be activated artificially in vitro. Part of the complex F(0) domain. The chain is ATP synthase F(0) complex subunit 8 from Physeter macrocephalus (Sperm whale).